Here is a 301-residue protein sequence, read N- to C-terminus: Small ribosomal subunit protein uS2 (301 aa).

It belongs to the universal ribosomal protein uS2 family. Component of the small ribosomal subunit. Mature ribosomes consist of a small (40S) and a large (60S) subunit. The 40S subunit contains about 33 different proteins and 1 molecule of RNA (18S). The 60S subunit contains about 49 different proteins and 3 molecules of RNA (28S, 5.8S and 5S). Interacts with ribosomal protein S21.

Its subcellular location is the cytoplasm. Required for the assembly and/or stability of the 40S ribosomal subunit. Required for the processing of the 20S rRNA-precursor to mature 18S rRNA in a late step of the maturation of 40S ribosomal subunits. The sequence is that of Small ribosomal subunit protein uS2 from Brugia malayi (Filarial nematode worm).